A 3141-amino-acid polypeptide reads, in one-letter code: Genome polyprotein (3141 aa).

A Peptidase S30 domain is found at 165–308 (RMSEASLQLF…KKQSNEIIHY (144 aa)). Active-site for P1 proteinase activity residues include His216, Asp225, and Ser259. Residues 360–363 (KITC) carry the Involved in interaction with stylet and aphid transmission motif. Positions 619–621 (PTK) match the Involved in virions binding and aphid transmission motif. Residues 645–767 (MFIAKAGYCY…DSNMKTYLVG (123 aa)) form the Peptidase C6 domain. Residues Cys653 and His726 each act as for helper component proteinase activity in the active site. Residues 1241 to 1393 (EVMHGSHQDI…TQKEVKVIVE (153 aa)) form the Helicase ATP-binding domain. 1254–1261 (GAVGSGKS) lines the ATP pocket. A DECH box motif is present at residues 1343–1346 (DECH). Positions 1412–1571 (DILKHGVNVL…GLPVMTNGVS (160 aa)) constitute a Helicase C-terminal domain. Residues 1898–1905 (KKGKSKGK) carry the Nuclear localization signal motif. An O-(5'-phospho-RNA)-tyrosine modification is found at Tyr1920. In terms of domain architecture, Peptidase C4 spans 2051–2269 (SKSLFRGLRD…VCWGSLQLKR (219 aa)). Catalysis depends on for nuclear inclusion protein A activity residues His2096, Asp2131, and Cys2201. The region spanning 2535–2659 (WIYCDADGSQ…AVHPAYESIY (125 aa)) is the RdRp catalytic domain. A phosphoserine mark is found at Ser2836, Ser2892, Ser2912, and Ser2929. 2 positions are modified to phosphothreonine: Thr3065 and Thr3124.

This sequence belongs to the potyviridae genome polyprotein family. In terms of assembly, interacts with host eIF4E protein (via cap-binding region); this interaction mediates the translation of the VPg-viral RNA conjugates. Part of a complex that comprises VPg, RNA, host EIF4E and EIF4G; this interaction mediates the translation of the VPg-viral RNA conjugates. Interacts with host eIF(iso)4E both in host nucleus and cytoplasm. Post-translationally, VPg is uridylylated by the polymerase and is covalently attached to the 5'-end of the genomic RNA. This uridylylated form acts as a nucleotide-peptide primer for the polymerase. Potyviral RNA is expressed as two polyproteins which undergo post-translational proteolytic processing. Genome polyprotein is processed by NIa-pro, P1 and HC-pro proteinases resulting in the production of at least ten individual proteins. P3N-PIPO polyprotein is cleaved by P1 and HC-pro proteinases resulting in the production of three individual proteins. The P1 proteinase and the HC-pro cleave only their respective C-termini autocatalytically. 6K1 is essential for proper proteolytic separation of P3 from CI.

It is found in the host cytoplasmic vesicle. The protein localises to the host nucleus. Its subcellular location is the host cytoplasm. The protein resides in the virion. It carries out the reaction RNA(n) + a ribonucleoside 5'-triphosphate = RNA(n+1) + diphosphate. It catalyses the reaction Hydrolyzes glutaminyl bonds, and activity is further restricted by preferences for the amino acids in P6 - P1' that vary with the species of potyvirus, e.g. Glu-Xaa-Xaa-Tyr-Xaa-Gln-|-(Ser or Gly) for the enzyme from tobacco etch virus. The natural substrate is the viral polyprotein, but other proteins and oligopeptides containing the appropriate consensus sequence are also cleaved.. The catalysed reaction is Hydrolyzes a Gly-|-Gly bond at its own C-terminus, commonly in the sequence -Tyr-Xaa-Val-Gly-|-Gly, in the processing of the potyviral polyprotein.. Required for aphid transmission and also has proteolytic activity. Only cleaves a Gly-Gly dipeptide at its own C-terminus. Interacts with virions and aphid stylets. Acts as a suppressor of RNA-mediated gene silencing, also known as post-transcriptional gene silencing (PTGS), a mechanism of plant viral defense that limits the accumulation of viral RNAs. May have RNA-binding activity. Functionally, has helicase activity. It may be involved in replication. In terms of biological role, indispensable for virus replication. Reduces the abundance of host transcripts related to jasmonic acid biosynthesis therefore altering the host defenses. In order to increase its own stability, decreases host protein degradation pathways. Its function is as follows. Indispensable for virus replication. Mediates the cap-independent, EIF4E-dependent translation of viral genomic RNAs. Binds to the cap-binding site of host EIF4E and thus interferes with the host EIF4E-dependent mRNA export and translation. VPg-RNA directly binds EIF4E and is a template for transcription. Also forms trimeric complexes with EIF4E-EIF4G, which are templates for translation. Functionally, has RNA-binding and proteolytic activities. In terms of biological role, an RNA-dependent RNA polymerase that plays an essential role in the virus replication. Its function is as follows. Involved in aphid transmission, cell-to-cell and systemis movement, encapsidation of the viral RNA and in the regulation of viral RNA amplification. This chain is Genome polyprotein, found in Plum pox potyvirus (strain D) (PPV).